A 974-amino-acid polypeptide reads, in one-letter code: MEDRSKYIAEESEDEEDEEQEEKEKKGGASTSTETEEDQEDIPSVIVPTINIREERLVDLAQTPAFLCLNELHTSGKLPGTRMAELKAKYTLLHDTVVSTQESEVQLLENAKRFTEQIQQQQVRLQEADDFPNVFTTEVSKLREQLLKYQNEYTAVQEREYHTQYRLNSLTEEKSLVLKEFEKIPKPGEIEKKTKLLKESTEELRKEVIQKRLEIKNLREDVVSKQKQLMKEQKELEELMDYQVGLKDDVVHHQSVPVQITKEIEKLTRRKIETEKKNVVLEFELKELSDSLKKLENKVSALAEERDDTIKEVEGKRTLLEVKEREYGQLLKLLELTKENEASSLAERGILDINLRNCLMDKQNYHDELSRKQREKERDFRNLKKTELLLKVSLDALSQAQALNQRLLLEMEAIPKEDLLLPEQRKELHKEVDLAKRNLAQQRSLSEAEAKLVEQQIAEENKLLKEQETMREVLFNLGRMTQIKMEEKEQKAKDFLKSQRRYCDIIKEIKSKKLEIRLYRKRKREIHRRLKEFAGLYDAIRNERNKFVNLLHKAYQKVNEIKERLKMSLNELEILRSSAVSQERKLQNAMLKHSNNVTIRESMQNDVCKITAKLQEMKEKKEAQLTSMDRLASMITVIEEEMVQLRKKYEKAVQRRNESGVQLIEREEEVCIFYEKMNIQDKVKLHQDIEIHILEEKIRFLKLKVAEKQRQICVTQKLVPIKKSLDANLAVVQIQFSQCADRIKALEKCFVNPDCQGRVRFIPGKDLTEEEMIKKLDMLELQLAKKEEKLLEKDFIYEQVSQLTNRLKTKTQACKMDTLLLAKKMNSYQKKIKDVTQEMMALVAELSMKQALTIELQKEVREKEEFIFSCSSRIEKGLPLNREIEKDWLKVLRDEEMYAFATAEKTREYIDTDYRQLPNGVYTTAEQRPNAYIPETDATLPLPKPYGALAPFKPSEPGANRRHIRKPIIKPIEI.

The interval Met-1 to Ser-44 is disordered. Over residues Glu-10–Glu-21 the composition is skewed to acidic residues. Ser-12 bears the Phosphoserine mark. Coiled coils occupy residues Val-105–Glu-160, Lys-195–Asn-340, Leu-421–Leu-474, Lys-512–Gly-660, Gln-687–Ile-712, and Leu-767–Met-848.

As to quaternary structure, interacts with CCDC38 and CCDC42. Interacts with intraflagellar transport proteins IFT20 and IFT88.

The protein localises to the cytoplasm. Its subcellular location is the cytoskeleton. The protein resides in the microtubule organizing center. It is found in the centrosome. It localises to the centriole. The protein localises to the cell projection. Its subcellular location is the cilium. The protein resides in the flagellum. It is found in the flagellum axoneme. It localises to the cilium basal body. The protein localises to the midbody. Functionally, essential for sperm flagellum biogenesis and male fertility. This chain is Coiled-coil domain-containing protein 146 (Ccdc146), found in Rattus norvegicus (Rat).